We begin with the raw amino-acid sequence, 544 residues long: tRNA pseudouridine synthase 1 (544 aa).

2 stretches are compositionally biased toward basic and acidic residues: residues 1–10 (MSEENLRPAY) and 31–61 (RKAD…RLDE). The segment at 1–74 (MSEENLRPAY…PLPKEPRLPK (74 aa)) is disordered. The Nucleophile role is filled by Asp-134. Residues 495–544 (IPGLTDAPESNKKIKQRKRMEEEEAASKKAEISSTTQSNEPEVQPEAAAN) are disordered. Residues 513–525 (RMEEEEAASKKAE) show a composition bias toward basic and acidic residues.

Belongs to the tRNA pseudouridine synthase TruA family. The cofactor is Zn(2+).

It is found in the nucleus. The enzyme catalyses a uridine in tRNA = a pseudouridine in tRNA. It carries out the reaction uridine in snRNA = pseudouridine in snRNA. It catalyses the reaction a uridine in mRNA = a pseudouridine in mRNA. Formation of pseudouridine at positions 27 and 28 in the anticodon stem and loop of transfer RNAs; at positions 34 and 36 of intron-containing precursor tRNA(Ile) and at position 35 in the intron-containing tRNA(Tyr). Catalyzes pseudouridylation at position 44 in U2 snRNA. Also catalyzes pseudouridylation of mRNAs. The polypeptide is tRNA pseudouridine synthase 1 (PUS1) (Saccharomyces cerevisiae (strain ATCC 204508 / S288c) (Baker's yeast)).